Here is a 144-residue protein sequence, read N- to C-terminus: Large ribosomal subunit protein uL16 (144 aa).

The protein belongs to the universal ribosomal protein uL16 family. Part of the 50S ribosomal subunit.

Functionally, binds 23S rRNA and is also seen to make contacts with the A and possibly P site tRNAs. This is Large ribosomal subunit protein uL16 from Lacticaseibacillus paracasei (strain ATCC 334 / BCRC 17002 / CCUG 31169 / CIP 107868 / KCTC 3260 / NRRL B-441) (Lactobacillus paracasei).